We begin with the raw amino-acid sequence, 132 residues long: Dehydratase CTB10 (132 aa).

In terms of domain architecture, EthD spans 21 to 117 (PDQSEEDHHN…IPDHFNFADM (97 aa)).

The protein belongs to the tpcK family.

The protein operates within mycotoxin biosynthesis. Its function is as follows. Dehydratase; part of the gene cluster that mediates the biosynthesis of cercosporin, a light-activated, non-host-selective toxin. The perylenequinone chromophore of cercosporin absorbs light energy to attain an electronically-activated triplet state and produces active oxygen species such as the hydroxyl radical, superoxide, hydrogen peroxide or singlet oxygen upon reaction with oxygen molecules. These reactive oxygen species cause damage to various cellular components including lipids, proteins and nucleic acids. The first step of cercosporin biosynthesis is performed by the polyketide synthase CTB1 which catalyzes the formation of nor-toralactone. The starter unit acyltransferase (SAT) domain of CTB1 initiates polyketide extension by the selective utilization of acetyl-CoA, which is elongated to the heptaketide in the beta-ketoacyl synthase (KS) domain by successive condensations with six malonyl units introduced by the malonyl acyltransferase (MAT) domain. The product template (PT) domain catalyzes C4-C9 and C2-C11 aldol cyclizations and dehydrations to a trihydroxynaphthalene, which is thought to be delivered to the thioesterase (TE) domain for product release. The bifunctional enzyme CTB3 then methylates nor-toralactone to toralactone before conducting an unusual oxidative aromatic ring opening. The O-methyltransferase CTB2 further methylates the nascent OH-6 of the CBT3 product, blocking further oxidation at this site before the reductase CTB6 reduces the 2-oxopropyl ketone at position C7, giving naphthalene. The FAD-dependent monooxygenase CTB5 in concert with the multicopper oxidase CTB12 are responsible for homodimerization of naphthalene with CTB7 installing the dioxepine moiety, finally producing cercosporin. The fasciclin domain-containing protein CTB11 might act with CTB5 and CTB12 whereas the roles of CTB9 and CTB10 have still to be elucidated. In Cercospora beticola (Sugarbeet leaf spot fungus), this protein is Dehydratase CTB10.